Consider the following 250-residue polypeptide: Kallikrein-14 (250 aa).

The N-terminal stretch at Met1–Ser18 is a signal peptide. Positions Gln19 to Lys23 are cleaved as a propeptide — activation peptide. A Peptidase S1 domain is found at Ile24 to Gln248. An intrachain disulfide couples Cys51 to Cys67. Active-site charge relay system residues include His66 and Asp110. 3 cysteine pairs are disulfide-bonded: Cys142-Cys209, Cys174-Cys188, and Cys199-Cys224. The active-site Charge relay system is the Ser203.

Belongs to the peptidase S1 family. Kallikrein subfamily. In terms of processing, proteolytic cleavage of the activation peptide produces the active enzyme.

It localises to the secreted. Its subcellular location is the extracellular space. Its activity is regulated as follows. Inhibited by SERPINA1, SERPINC1, SERPINE1, SERPINF2, aprotinin, soybean, trypsin inhibitor and leupeptin. Inhibited by serine protease inhibitor SPINK5. Has an autoproteolytic activity which may have a regulatory effect. Activated by citrate and inhibited by zinc and to a lower extent by manganese. Serine-type endopeptidase with a dual trypsin-like and chymotrypsin-like substrate specificity. May activate/inactivate the proteinase-activated receptors F2R, F2RL1 and F2RL3 and other kallikreins including KLK1, KLK3, KLK5 and KLK11. May function in seminal clot liquefaction through direct cleavage of the semenogelin SEMG1 and SEMG2 and activation of KLK3. May function through desmoglein DSG1 cleavage in epidermal desquamation a process by which the most superficial corneocytes are shed from the skin surface. May be involved in several aspects of tumor progression including growth, invasion and angiogenesis. In Mus musculus (Mouse), this protein is Kallikrein-14 (Klk14).